A 613-amino-acid chain; its full sequence is Zinc finger CCCH domain-containing protein 59 (613 aa).

A disordered region spans residues 275–296; the sequence is NTTLSPYISPAKSVPVEETPKR. 2 C3H1-type zinc fingers span residues 318–346 and 350–378; these read AGGNRLCFKFTSSGSCPRGSKCNYRHDEE and HYNRNVCFDFLNKGKCEKGPECRFAHSLS.

The sequence is that of Zinc finger CCCH domain-containing protein 59 from Oryza sativa subsp. japonica (Rice).